Consider the following 341-residue polypeptide: Large ribosomal subunit protein uL29m (341 aa).

The tract at residues 44–74 (LARTRYTKPKPKPPRRSKVRAPTQTTHHDTD) is disordered. The segment covering 48 to 62 (RYTKPKPKPPRRSKV) has biased composition (basic residues).

This sequence belongs to the universal ribosomal protein uL29 family. As to quaternary structure, component of the mitochondrial large ribosomal subunit. Mature mitochondrial ribosomes consist of a small (37S) and a large (54S) subunit. The 37S subunit contains at least 33 different proteins and 1 molecule of RNA (15S). The 54S subunit contains at least 45 different proteins and 1 molecule of RNA (21S).

It is found in the mitochondrion. The protein is Large ribosomal subunit protein uL29m (MRPL4) of Eremothecium gossypii (strain ATCC 10895 / CBS 109.51 / FGSC 9923 / NRRL Y-1056) (Yeast).